Consider the following 78-residue polypeptide: Protein FAM240B (78 aa).

This sequence belongs to the FAM240 family.

This Homo sapiens (Human) protein is Protein FAM240B.